We begin with the raw amino-acid sequence, 141 residues long: Large ribosomal subunit protein uL11 (141 aa).

It belongs to the universal ribosomal protein uL11 family. Part of the ribosomal stalk of the 50S ribosomal subunit. Interacts with L10 and the large rRNA to form the base of the stalk. L10 forms an elongated spine to which L12 dimers bind in a sequential fashion forming a multimeric L10(L12)X complex. In terms of processing, one or more lysine residues are methylated.

Functionally, forms part of the ribosomal stalk which helps the ribosome interact with GTP-bound translation factors. The protein is Large ribosomal subunit protein uL11 of Selenomonas ruminantium.